The primary structure comprises 564 residues: Kelch-like protein 12 (564 aa).

In terms of domain architecture, BTB spans 29 to 96; sequence CDITLRVEGT…VYTETVLVTV (68 aa). The BACK domain maps to 131–232; it reads CLGIRDFAET…LTPRYITDVI (102 aa). Kelch repeat units follow at residues 278–325, 327–375, 376–422, 423–469, 471–516, and 518–563; these read VLLV…ALND, VYVI…TLGD, MIYV…VASG, LIYC…LLND, IYVV…VLRG, and LYAI…VLRE.

As to quaternary structure, component of the BCR(KLHL12) E3 ubiquitin ligase complex.

The protein resides in the cytoplasmic vesicle. It is found in the COPII-coated vesicle. The protein operates within protein modification; protein ubiquitination. Its function is as follows. Substrate-specific adapter of a BCR (BTB-CUL3-RBX1) E3 ubiquitin ligase complex that acts as a negative regulator of Wnt signaling pathway and ER-Golgi transport. The BCR(KLHL12) complex is involved in ER-Golgi transport by regulating the size of COPII coats, thereby playing a key role in collagen export, which is required for embryonic stem (ES) cells division. Negatively regulates the Wnt signaling pathway, possibly via the targeted ubiquitination and subsequent proteolysis of dvl2 and dvl3. Regulates convergent-extension movements during early embryonic development. The sequence is that of Kelch-like protein 12 (klhl12) from Danio rerio (Zebrafish).